The chain runs to 168 residues: DOMON domain-containing protein CBG21753 (168 aa).

The signal sequence occupies residues 1-17; sequence MIKSMILVALILAFASA. A DOMON domain is found at 25–143; it reads SGFQSYWRFA…CQKWRWIKSG (119 aa). N-linked (GlcNAc...) asparagine glycans are attached at residues asparagine 35 and asparagine 94. Residues 148–168 are disordered; sequence GQLTRNSKSPKDKKVCPMECN. Positions 156–168 are enriched in basic and acidic residues; that stretch reads SPKDKKVCPMECN.

It localises to the secreted. In Caenorhabditis briggsae, this protein is DOMON domain-containing protein CBG21753.